A 425-amino-acid polypeptide reads, in one-letter code: Secernin-2 (425 aa).

Cysteine 12 is a catalytic residue. At threonine 52 the chain carries Phosphothreonine.

The protein belongs to the peptidase C69 family. Secernin subfamily.

The sequence is that of Secernin-2 (SCRN2) from Homo sapiens (Human).